The sequence spans 460 residues: Probable carboxylesterase 11 (460 aa).

2 stretches are compositionally biased toward polar residues: residues 26–35 (QSSGDESSSD) and 132–145 (NSYGYTTGSSSPEA). 2 disordered regions span residues 26 to 52 (QSSGDESSSDPFGVTTRPEESVAAPNP) and 132 to 161 (NSYGYTTGSSSPEAGSSDVYRGYAPSSSGG). An Involved in the stabilization of the negatively charged intermediate by the formation of the oxyanion hole motif is present at residues 173-175 (HGG). Active-site residues include Ser-289, Asp-392, and His-422.

Belongs to the 'GDXG' lipolytic enzyme family. As to expression, expressed in roots, leaves, stems, flowers and siliques.

The catalysed reaction is a carboxylic ester + H2O = an alcohol + a carboxylate + H(+). Its function is as follows. Carboxylesterase acting on esters with varying acyl chain length. The protein is Probable carboxylesterase 11 (CXE11) of Arabidopsis thaliana (Mouse-ear cress).